Reading from the N-terminus, the 122-residue chain is Large ribosomal subunit protein bL12 (122 aa).

Belongs to the bacterial ribosomal protein bL12 family. Homodimer. Part of the ribosomal stalk of the 50S ribosomal subunit. Forms a multimeric L10(L12)X complex, where L10 forms an elongated spine to which 2 to 4 L12 dimers bind in a sequential fashion. Binds GTP-bound translation factors.

In terms of biological role, forms part of the ribosomal stalk which helps the ribosome interact with GTP-bound translation factors. Is thus essential for accurate translation. This is Large ribosomal subunit protein bL12 from Mesoplasma florum (strain ATCC 33453 / NBRC 100688 / NCTC 11704 / L1) (Acholeplasma florum).